The primary structure comprises 174 residues: MRKFFKYFLFIVVFLFHGFMFSVVNYVFPHYDVTRVTGVEVKRVDKDGPITKSNPADGPTRDVYYINTQNDDGKIMVYRNEDTRWGFPFYFKFGSANLQAEAQALGNDNKLVQIKYYGWRITMVDEYRNATSIKEITADDTPSNPIVSWILYVFLLATLFLSIQFIRGWFDSDK.

Transmembrane regions (helical) follow at residues 8–28 (FLFI…NYVF) and 146–166 (IVSW…IQFI).

Its subcellular location is the cell membrane. This is an uncharacterized protein from Haemophilus influenzae (strain ATCC 51907 / DSM 11121 / KW20 / Rd).